A 361-amino-acid polypeptide reads, in one-letter code: Chorismate synthase (361 aa).

R48 serves as a coordination point for NADP(+). FMN is bound by residues 126 to 128 (RSS), G269, 302 to 306 (KPVPS), and N328.

The protein belongs to the chorismate synthase family. As to quaternary structure, homotetramer. FMNH2 is required as a cofactor.

It catalyses the reaction 5-O-(1-carboxyvinyl)-3-phosphoshikimate = chorismate + phosphate. It functions in the pathway metabolic intermediate biosynthesis; chorismate biosynthesis; chorismate from D-erythrose 4-phosphate and phosphoenolpyruvate: step 7/7. Its function is as follows. Catalyzes the anti-1,4-elimination of the C-3 phosphate and the C-6 proR hydrogen from 5-enolpyruvylshikimate-3-phosphate (EPSP) to yield chorismate, which is the branch point compound that serves as the starting substrate for the three terminal pathways of aromatic amino acid biosynthesis. This reaction introduces a second double bond into the aromatic ring system. This chain is Chorismate synthase, found in Treponema denticola (strain ATCC 35405 / DSM 14222 / CIP 103919 / JCM 8153 / KCTC 15104).